Here is a 108-residue protein sequence, read N- to C-terminus: Acid stress chaperone HdeB (108 aa).

The first 29 residues, 1–29 (MNISSLRKAFIFMGAVAALSLVNAQSALA), serve as a signal peptide directing secretion. Lysine 93 is modified (N6-acetyllysine).

Belongs to the HdeB family.

It is found in the periplasm. In terms of biological role, required for optimal acid stress protection, which is important for survival of enteric bacteria in the acidic environment of the host stomach. Exhibits a chaperone-like activity at acidic pH by preventing the aggregation of many different periplasmic proteins. In Escherichia coli O6:H1 (strain CFT073 / ATCC 700928 / UPEC), this protein is Acid stress chaperone HdeB.